Reading from the N-terminus, the 180-residue chain is ATP-dependent protease subunit HslV (180 aa).

Thr5 is an active-site residue. Residues Gly165, Cys168, and Thr171 each coordinate Na(+).

Belongs to the peptidase T1B family. HslV subfamily. A double ring-shaped homohexamer of HslV is capped on each side by a ring-shaped HslU homohexamer. The assembly of the HslU/HslV complex is dependent on binding of ATP.

It localises to the cytoplasm. It carries out the reaction ATP-dependent cleavage of peptide bonds with broad specificity.. With respect to regulation, allosterically activated by HslU binding. Functionally, protease subunit of a proteasome-like degradation complex believed to be a general protein degrading machinery. The polypeptide is ATP-dependent protease subunit HslV (Helicobacter pylori (strain ATCC 700392 / 26695) (Campylobacter pylori)).